A 216-amino-acid polypeptide reads, in one-letter code: RNA pyrophosphohydrolase (216 aa).

One can recognise a Nudix hydrolase domain in the interval 6–149; that stretch reads GFRPNVGIIL…KRDVYQLALT (144 aa). Residues 38-59 carry the Nudix box motif; that stretch reads GGIKYGETPMQAMYRELHEETG. Residues 159 to 191 form a disordered region; sequence AQRTDKSRGPRAPRYPRVANGHAASETPAAIDT.

This sequence belongs to the Nudix hydrolase family. RppH subfamily. Requires a divalent metal cation as cofactor.

Functionally, accelerates the degradation of transcripts by removing pyrophosphate from the 5'-end of triphosphorylated RNA, leading to a more labile monophosphorylated state that can stimulate subsequent ribonuclease cleavage. The protein is RNA pyrophosphohydrolase of Burkholderia pseudomallei (strain 668).